We begin with the raw amino-acid sequence, 83 residues long: U5-theraphotoxin-Hs1a 1 (83 aa).

An N-terminal signal peptide occupies residues 1–21; that stretch reads MKTSMFLTLTGLGLLFVVCYA. The propeptide occupies 22 to 49; that stretch reads SESEEKEFPKELLSSIFAADSDFKVEER. 3 cysteine pairs are disulfide-bonded: Cys-51–Cys-63, Cys-56–Cys-68, and Cys-62–Cys-75.

It belongs to the neurotoxin 10 (Hwtx-1) family. 51 (Hntx-8) subfamily. Hntx-8 sub-subfamily. As to expression, expressed by the venom gland.

Its subcellular location is the secreted. Its function is as follows. Agglutinates human and mice erythrocytes. This activity can be specifically inhibited by mannosamine. This lectin shows very low toxicity in both mammals and insects. In Cyriopagopus schmidti (Chinese bird spider), this protein is U5-theraphotoxin-Hs1a 1.